The sequence spans 121 residues: MAGARRTMALVALVAVVAAAVVAERASAAVSCGDVTSSIAPCLSYVMGRESSPSSSCCSGVRTLNGKASSSADRRTACSCLKNMASSFRNLNMGNAASIPSKCGVSVAFPISTSVDCSKIN.

The N-terminal stretch at 1–28 (MAGARRTMALVALVAVVAAAVVAERASA) is a signal peptide. Disulfide bonds link cysteine 32–cysteine 80, cysteine 42–cysteine 57, cysteine 58–cysteine 103, and cysteine 78–cysteine 117.

Belongs to the plant LTP family.

Plant non-specific lipid-transfer proteins transfer phospholipids as well as galactolipids across membranes. May play a role in wax or cutin deposition in the cell walls of expanding epidermal cells and certain secretory tissues. May possess an antifungal activity and protect the plant against pathogens. This is Non-specific lipid-transfer protein 3 (LTP110-A) from Oryza sativa subsp. indica (Rice).